Consider the following 342-residue polypeptide: Small GTPase LIP1 (342 aa).

Positions 12-285 (KEQILAPLCG…FHGDPYKYNN (274 aa)) are small GTPase-like. GTP is bound by residues 29–36 (GDSGVGKT), 90–94 (DVSGH), and 160–163 (NKAD). 2 disordered regions span residues 274–313 (TSFH…TPDN) and 323–342 (SVQE…DINV). Positions 323 to 333 (SVQETTNNGSA) are enriched in polar residues.

The protein belongs to the small GTPase superfamily.

The protein localises to the nucleus. It localises to the cytoplasm. Functionally, functional small GTPase that acts as a negative factor controlling the light-dependent period shortening of circadian rhythms and light-induced phase resetting during the subjective night. May protect the clock from excessive or mistimed light. Suppresses red and blue light-mediated photomorphogenesis and is required for light-controlled inhibition of endoreplication and tolerance to salt stress. The entrainment of the circadian clock is independent from the other pleiotropic effects. Could be a regulator of seedling establishment. The protein is Small GTPase LIP1 of Arabidopsis thaliana (Mouse-ear cress).